The chain runs to 168 residues: uncharacterized protein (168 aa).

Residues 1–21 form the signal peptide; the sequence is MVYEVLAVVSGGLLGFGVTWA.

This is an uncharacterized protein from Archaeoglobus fulgidus (strain ATCC 49558 / DSM 4304 / JCM 9628 / NBRC 100126 / VC-16).